A 124-amino-acid polypeptide reads, in one-letter code: Large ribosomal subunit protein bL12c (124 aa).

This sequence belongs to the bacterial ribosomal protein bL12 family. In terms of assembly, homodimer. Part of the ribosomal stalk of the 50S ribosomal subunit. Forms a multimeric L10(L12)X complex, where L10 forms an elongated spine to which 2 to 4 L12 dimers bind in a sequential fashion. Binds GTP-bound translation factors.

The protein resides in the plastid. Its subcellular location is the chloroplast. Forms part of the ribosomal stalk which helps the ribosome interact with GTP-bound translation factors. Is thus essential for accurate translation. The polypeptide is Large ribosomal subunit protein bL12c (Cyanidioschyzon merolae (strain NIES-3377 / 10D) (Unicellular red alga)).